The primary structure comprises 115 residues: uncharacterized protein (115 aa).

This is an uncharacterized protein from Ostreid herpesvirus 1 (isolate France) (OsHV-1).